We begin with the raw amino-acid sequence, 342 residues long: MKIAIIRLSALGDIIQSAVVLQFIKKFKKDIEIHWFVDEKFEGILKNHPLIDKLYALPLKDKKIIQSLRILLEARKNNYNAVMDLQGLVKSAIVSRILSRNNFGFDKNSLKESFAHNFYNQKLNIDYNENVFVRYLGLTSFMLNKYFDPKDLAFKEDVFSVDEKLKQLLSEKMQLTKNKKNILIHVGSSEENKIYPKTKLALLCKLIIKEFPEIKIFLGWGNLKEYEFAKEVIELGAISQDNIEIAPKFSLEELIVFAKSMDLIIGNDSGPTHLAFALNRPSITIFGATPSYRNAFKTNINKIIDTGKKITNTKHLDKSDFCISTIEEEDILKLVKELFGDE.

8 residues coordinate ADP-L-glycero-beta-D-manno-heptose: Ser188, Ser189, Lys193, Glu225, Asp268, Ser269, Gly270, and His273.

The protein belongs to the glycosyltransferase 9 family.

Its subcellular location is the cell inner membrane. The enzyme catalyses an alpha-Kdo-(2-&gt;4)-alpha-Kdo-(2-&gt;6)-lipid A + ADP-L-glycero-beta-D-manno-heptose = an L-alpha-D-Hep-(1-&gt;5)-[alpha-Kdo-(2-&gt;4)]-alpha-Kdo-(2-&gt;6)-lipid A + ADP + H(+). Its pathway is bacterial outer membrane biogenesis; LPS core biosynthesis. Its function is as follows. Glycosyltransferase involved in the biosynthesis of the core oligosaccharide region of lipopolysaccharide (LPS). Catalyzes the addition of the first heptose unit to one 3-deoxy-D-manno-octulosonic acid (Kdo) residue of the Kdo2-lipid A module. This chain is Lipopolysaccharide heptosyltransferase 1, found in Campylobacter coli.